The chain runs to 535 residues: Peptide chain release factor 3 (535 aa).

One can recognise a tr-type G domain in the interval Ala-8–Gly-276. GTP contacts are provided by residues Ser-17–Thr-24, Asp-85–His-89, and Asn-139–Asp-142.

Belongs to the TRAFAC class translation factor GTPase superfamily. Classic translation factor GTPase family. PrfC subfamily.

The protein resides in the cytoplasm. Functionally, increases the formation of ribosomal termination complexes and stimulates activities of RF-1 and RF-2. It binds guanine nucleotides and has strong preference for UGA stop codons. It may interact directly with the ribosome. The stimulation of RF-1 and RF-2 is significantly reduced by GTP and GDP, but not by GMP. In Bordetella petrii (strain ATCC BAA-461 / DSM 12804 / CCUG 43448), this protein is Peptide chain release factor 3.